The chain runs to 208 residues: UPF0637 protein BCQ_3749 (208 aa).

It belongs to the UPF0637 family.

In Bacillus cereus (strain Q1), this protein is UPF0637 protein BCQ_3749.